A 318-amino-acid chain; its full sequence is Death effector domain-containing protein (318 aa).

Positions 25–103 constitute a DED domain; that stretch reads SLHRMFDIVG…RHDLLPYVTL (79 aa). Residues 128–191 are disordered; it reads PRALSDPEPR…SVTPDPKEKQ (64 aa).

In terms of assembly, interacts with CASP8, CASP10, KRT8, KRT18, CASP3 and FADD. Homodimerizes and heterodimerizes with DEDD2. Post-translationally, exists predominantly in a mono- or diubiquitinated form. Ubiquitously expressed.

Its subcellular location is the cytoplasm. It localises to the nucleus. It is found in the nucleolus. Its function is as follows. A scaffold protein that directs CASP3 to certain substrates and facilitates their ordered degradation during apoptosis. May also play a role in mediating CASP3 cleavage of KRT18. Regulates degradation of intermediate filaments during apoptosis. May play a role in the general transcription machinery in the nucleus and might be an important regulator of the activity of GTF3C3. Inhibits DNA transcription in vitro. In Mus musculus (Mouse), this protein is Death effector domain-containing protein (Dedd).